We begin with the raw amino-acid sequence, 312 residues long: Homoserine O-succinyltransferase (312 aa).

The active-site Acyl-thioester intermediate is C142. Positions 163 and 192 each coordinate substrate. Catalysis depends on H235, which acts as the Proton acceptor. Residue E237 is part of the active site. R249 serves as a coordination point for substrate.

It belongs to the MetA family.

It localises to the cytoplasm. The catalysed reaction is L-homoserine + succinyl-CoA = O-succinyl-L-homoserine + CoA. It participates in amino-acid biosynthesis; L-methionine biosynthesis via de novo pathway; O-succinyl-L-homoserine from L-homoserine: step 1/1. Its function is as follows. Transfers a succinyl group from succinyl-CoA to L-homoserine, forming succinyl-L-homoserine. The chain is Homoserine O-succinyltransferase from Aliivibrio salmonicida (strain LFI1238) (Vibrio salmonicida (strain LFI1238)).